The chain runs to 178 residues: Ras-like protein (178 aa).

GTP is bound at residue 1–6 (GGVGKS). The Effector region motif lies at 21–29 (YDPTIEDSY). GTP is bound by residues 46 to 50 (DTAGQ) and 105 to 108 (NKCD). C175 bears the Cysteine methyl ester mark. C175 carries S-geranylgeranyl cysteine lipidation. Positions 176-178 (SIL) are cleaved as a propeptide — removed in mature form.

Belongs to the small GTPase superfamily. Ras family.

Its subcellular location is the cell membrane. The enzyme catalyses GTP + H2O = GDP + phosphate + H(+). Its activity is regulated as follows. Alternates between an inactive form bound to GDP and an active form bound to GTP. Activated by a guanine nucleotide-exchange factor (GEF) and inactivated by a GTPase-activating protein (GAP). Functionally, ras proteins bind GDP/GTP and possess intrinsic GTPase activity. This Artemia salina (Brine shrimp) protein is Ras-like protein.